Reading from the N-terminus, the 350-residue chain is Small ribosomal subunit biogenesis GTPase RsgA (350 aa).

Residues 1–30 (MSKRKLTQNQQRRIQSNNAKTLHRHQHRHK) are disordered. Residues 7-20 (TQNQQRRIQSNNAK) show a composition bias toward polar residues. Basic residues predominate over residues 21–30 (TLHRHQHRHK). Positions 106–274 (HNQIVRPDYY…LIDSPGIREF (169 aa)) constitute a CP-type G domain. Residues 162 to 165 (NKAD) and 216 to 224 (GQSGVGKSS) each bind GTP. Residues cysteine 298, cysteine 303, histidine 305, and cysteine 311 each coordinate Zn(2+).

The protein belongs to the TRAFAC class YlqF/YawG GTPase family. RsgA subfamily. In terms of assembly, monomer. Associates with 30S ribosomal subunit, binds 16S rRNA. Requires Zn(2+) as cofactor.

It is found in the cytoplasm. One of several proteins that assist in the late maturation steps of the functional core of the 30S ribosomal subunit. Helps release RbfA from mature subunits. May play a role in the assembly of ribosomal proteins into the subunit. Circularly permuted GTPase that catalyzes slow GTP hydrolysis, GTPase activity is stimulated by the 30S ribosomal subunit. This Histophilus somni (strain 2336) (Haemophilus somnus) protein is Small ribosomal subunit biogenesis GTPase RsgA.